The primary structure comprises 147 residues: Peptidyl-lysine N-acetyltransferase YjaB (147 aa).

Residues 3–144 enclose the N-acetyltransferase domain; the sequence is ISIRRSRHEE…KPYPLLNLAY (142 aa).

This sequence belongs to the acetyltransferase family.

It catalyses the reaction L-lysyl-[protein] + acetyl-CoA = N(6)-acetyl-L-lysyl-[protein] + CoA + H(+). In terms of biological role, N-epsilon-lysine acetyltransferase that catalyzes acetylation of a large number of proteins. Binds acetyl-CoA. The polypeptide is Peptidyl-lysine N-acetyltransferase YjaB (yjaB) (Escherichia coli (strain K12)).